The primary structure comprises 458 residues: Adenylosuccinate synthetase (458 aa).

Residues 17 to 23 (GDEGKGK) and 45 to 47 (GHT) contribute to the GTP site. Residue Asp18 is the Proton acceptor of the active site. Mg(2+) is bound by residues Asp18 and Gly45. Residues 18–21 (DEGK), 43–46 (NAGH), Thr137, Arg151, Gln247, Thr262, and Arg330 each bind IMP. His46 acts as the Proton donor in catalysis. Residue 326–332 (VTTGRSR) coordinates substrate. GTP-binding positions include Arg332, 358–360 (KLD), and 440–442 (STS).

This sequence belongs to the adenylosuccinate synthetase family. In terms of assembly, homodimer. Mg(2+) is required as a cofactor.

Its subcellular location is the cytoplasm. It catalyses the reaction IMP + L-aspartate + GTP = N(6)-(1,2-dicarboxyethyl)-AMP + GDP + phosphate + 2 H(+). It participates in purine metabolism; AMP biosynthesis via de novo pathway; AMP from IMP: step 1/2. Plays an important role in the de novo pathway of purine nucleotide biosynthesis. Catalyzes the first committed step in the biosynthesis of AMP from IMP. This chain is Adenylosuccinate synthetase, found in Delftia acidovorans (strain DSM 14801 / SPH-1).